We begin with the raw amino-acid sequence, 320 residues long: ATPase H(+)-transporting accessory protein 2 (320 aa).

The N-terminal stretch at 1-17 is a signal peptide; the sequence is MLRVFVIFSLFIAAINA. Residues 18–277 lie on the Lumenal side of the membrane; sequence SGEFTVLNRP…YGSDYPVIFN (260 aa). The chain crosses the membrane as a helical span at residues 278 to 298; it reads IILWFMVVFGLSLLAICYAIA. Over 299–320 the chain is Cytoplasmic; that stretch reads AMDPGRDSIIYRMTSTRIKKDN. A Mediates retrograde transport to the ER motif is present at residues 317 to 320; the sequence is KKDN.

In terms of assembly, interacts with fz and fz2. Interacts (via N-terminus) with stan. As an accessory component of the multisubunit proton-transporting vacuolar (V)-ATPase protein pump, might interacts with VhaAC45. Proteolytically cleaved by a furin-like convertase in the trans-Golgi network to generate N- and C-terminal fragments. Cleavage is reduced in the fat body.

It localises to the cell membrane. It is found in the endoplasmic reticulum membrane. The protein localises to the vesicle. The protein resides in the apical cell membrane. Its subcellular location is the golgi apparatus membrane. It localises to the secreted. Functionally, multifunctional protein which functions as a transmembrane receptor in the planar cell polarity (PCP) and is involved in the assembly of the proton-transporting vacuolar (V)-ATPase protein pump. As transmembrane receptor mediates fz/PCP signaling through interaction with fz and stabilizes asymmetric PCP domains through its interaction with stan. Also mediates Wnt/beta-cat signaling through interaction with fz/fz2. Probably by controlling the assembly of the V-ATPase pump and thus the acidification of the endo-lysosomal system, plays a role in many neuronal processes including synapse morphology and synaptic transmission. Stabilizes asymmetric Planar Cell Polarity (PCP) domains through its interaction with stan. This is ATPase H(+)-transporting accessory protein 2 from Drosophila melanogaster (Fruit fly).